Consider the following 194-residue polypeptide: Thymidylate kinase (194 aa).

7–14 is a binding site for ATP; it reads GVDGVGKS.

This sequence belongs to the thymidylate kinase family.

The catalysed reaction is dTMP + ATP = dTDP + ADP. Phosphorylation of dTMP to form dTDP in both de novo and salvage pathways of dTTP synthesis. This Campylobacter curvus (strain 525.92) protein is Thymidylate kinase.